We begin with the raw amino-acid sequence, 254 residues long: MAYSKIRQPKLSDVIEQQLEFLILEGTLRPGEKLPPERELAKQFDVSRPSLREAIQRLEAKGLLLRRQGGGTFVQSSLWQSFSDPLVELLSDHPESQFDLLETRHALEGIAAYYAALRSTDEDKDRIRELHHAIELAQESGDLDAESEAVLQYQIAVTEAAHNVVLLHLLRCMEPMLAQNVRQNFELLYARREMLPLVSTHRTRIFEAIMAGKPEEAREASHRHLAFIEEIMLDRSREESRRERALRRLEQRKN.

The HTH gntR-type domain maps to 9–77 (PKLSDVIEQQ…QGGGTFVQSS (69 aa)). The H-T-H motif DNA-binding region spans 37–56 (ERELAKQFDVSRPSLREAIQ).

Transcriptional repressor for the pyruvate dehydrogenase complex genes aceEF and lpd. In Salmonella typhi, this protein is Pyruvate dehydrogenase complex repressor (pdhR).